A 631-amino-acid polypeptide reads, in one-letter code: MBT domain-containing protein 1 (631 aa).

The disordered stretch occupies residues 1 to 31 (MFDGYDSCSEDTSSSSSSEESEEEVAPLPSN). The FCS-type zinc-finger motif lies at 45–80 (PDGKSGMATCEMCGMVGVRDAFYSKTKRFCSVSCSR). Zn(2+) is bound by residues Cys-54, Cys-57, Cys-74, and Cys-78. Lys-115 carries the post-translational modification N6-acetyllysine. 4 MBT repeats span residues 144 to 248 (FSWG…LVPP), 256 to 353 (TNWK…IGHR), 354 to 459 (FKRS…LTPP), and 467 to 563 (FKWF…LQPP). Residues 563-631 (PASQSSRESQ…SATVYIKQEP (69 aa)) are disordered. Residues 564 to 576 (ASQSSRESQSASS) are compositionally biased toward low complexity. The span at 577 to 593 (KQKKKAKSQQYKGHKKM) shows a compositional bias: basic residues.

As to quaternary structure, monomer. Component of the NuA4 histone acetyltransferase complex. Interacts with EPC1; interaction is direct and promotes recruitment of MBTD1 into the NuA4 histone acetyltransferase complex.

The protein resides in the nucleus. It localises to the chromosome. Its function is as follows. Chromatin reader component of the NuA4 histone acetyltransferase complex, a multiprotein complex involved in transcriptional activation of select genes principally by acetylation of nucleosomal histones H4 and H2A. The NuA4 complex plays a direct role in repair of DNA double-strand breaks (DSBs) by promoting homologous recombination (HR). MBTD1 specifically recognizes and binds monomethylated and dimethylated 'Lys-20' on histone H4 (H4K20me1 and H4K20me2, respectively). In the NuA4 complex, MBTD1 promotes recruitment of the complex to H4K20me marks by competing with TP53BP1 for binding to H4K20me. Following recruitment to H4K20me at DNA breaks, the NuA4 complex catalyzes acetylation of 'Lys-15' on histone H2A (H2AK15), blocking the ubiquitination mark required for TP53BP1 localization at DNA breaks, thereby promoting homologous recombination (HR). The sequence is that of MBT domain-containing protein 1 from Mus musculus (Mouse).